Reading from the N-terminus, the 333-residue chain is Anthranilate phosphoribosyltransferase (333 aa).

Residues G81, 84–85 (GD), T89, 91–94 (NIST), 109–117 (KHGNRSVSS), and A121 contribute to the 5-phospho-alpha-D-ribose 1-diphosphate site. Residue G81 participates in anthranilate binding. S93 contacts Mg(2+). N112 is a binding site for anthranilate. R167 provides a ligand contact to anthranilate. 2 residues coordinate Mg(2+): D225 and E226.

It belongs to the anthranilate phosphoribosyltransferase family. As to quaternary structure, homodimer. Mg(2+) serves as cofactor.

It carries out the reaction N-(5-phospho-beta-D-ribosyl)anthranilate + diphosphate = 5-phospho-alpha-D-ribose 1-diphosphate + anthranilate. Its pathway is amino-acid biosynthesis; L-tryptophan biosynthesis; L-tryptophan from chorismate: step 2/5. Catalyzes the transfer of the phosphoribosyl group of 5-phosphorylribose-1-pyrophosphate (PRPP) to anthranilate to yield N-(5'-phosphoribosyl)-anthranilate (PRA). The chain is Anthranilate phosphoribosyltransferase from Haemophilus influenzae (strain PittGG).